The following is a 68-amino-acid chain: Large ribosomal subunit protein bL33c (68 aa).

Belongs to the bacterial ribosomal protein bL33 family.

It is found in the plastid. The polypeptide is Large ribosomal subunit protein bL33c (Cuscuta reflexa (Southern Asian dodder)).